The following is a 1045-amino-acid chain: Tyrosine-protein kinase-like otk (1045 aa).

The N-terminal stretch at 1 to 25 is a signal peptide; it reads MPIVMDMNMLLMLSLAFTVMAPASA. 5 consecutive Ig-like C2-type domains span residues 26–116, 115–200, 260–373, 376–469, and 474–564; these read SSSR…AKLS, LSVI…RVMS, PEGL…APVN, PGAL…VAIN, and PRFS…VRLL. Residues 26–587 lie on the Extracellular side of the membrane; it reads SSSRFTQPPQ…AGDGFLVTRA (562 aa). Disulfide bonds link C49/C97, C139/C189, C285/C362, and C406/C453. Residues N344, N424, N435, N442, N450, N463, N518, and N530 are each glycosylated (N-linked (GlcNAc...) asparagine). Cysteines 496 and 548 form a disulfide. Residues 588-608 traverse the membrane as a helical segment; that stretch reads VLITMTVALAYIVLVVGLMLW. At 609–1045 the chain is on the cytoplasmic side; it reads CRYRRQARKA…LSKAMQAAEK (437 aa). The disordered stretch occupies residues 628–676; it reads AGGDQAESGKNTEQEPCLSKQRNGHGKSRTAANGDAQKSDDTACSQQSK. S681 carries the phosphoserine modification. The region spanning 695-1040 is the Protein kinase; inactive domain; sequence LSELIQIGRG…QLGAALSKAM (346 aa). Residues 722–790 are disordered; sequence ASPSDKDADT…QPQEQAQSES (69 aa). A compositionally biased stretch (basic and acidic residues) spans 725–736; the sequence is SDKDADTEKQHS. Positions 743 to 752 are enriched in gly residues; the sequence is GASGASGCGS. A compositionally biased stretch (acidic residues) spans 771–782; the sequence is DDIEEIKEEEQP.

This sequence belongs to the protein kinase superfamily. Tyr protein kinase family. Insulin receptor subfamily. As to quaternary structure, interacts with plexA; component of a receptor complex that mediates the repulsive signaling in response to Semaphorin ligands.

It is found in the cell membrane. Its function is as follows. Acts as a calcium-dependent, homophilic cell adhesion molecule that regulates neural recognition during the development of the nervous system. Component of the repulsive Plexin signaling response to regulate motor axon guidance at the embryonic stage. Also component of a receptor complex that is required in the adult visual system to innervate the lamina layer; specific targeting of R1-R6 axons. The polypeptide is Tyrosine-protein kinase-like otk (Drosophila mojavensis (Fruit fly)).